Reading from the N-terminus, the 773-residue chain is Glucan endo-1,3-beta-D-glucosidase (773 aa).

The tract at residues 1 to 194 (MPPGAKVPQA…KNYFSIAVLP (194 aa)) is beta-sandwich subdomain. The 647-residue stretch at 1–647 (MPPGAKVPQA…HWICNLDSLG (647 aa)) folds into the GH81 domain. Positions 31, 34, 35, 36, and 89 each coordinate Mg(2+). The alpha/beta subdomain stretch occupies residues 195–288 (DNTVSTLTYY…QGTSFKTVYR (94 aa)). Positions 298–647 (DKGTYDREAL…HWICNLDSLG (350 aa)) are (alpha/beta)6 barrel subdomain. (1,3-beta-D-glucosyl)n contacts are provided by Tyr-327 and Lys-331. Residues Asp-365, Thr-368, Glu-373, and Lys-376 each coordinate Ca(2+). Residues Asp-402 and His-406 each coordinate (1,3-beta-D-glucosyl)n. Asp-402 is an active-site residue. Leu-454, Arg-455, and Phe-457 together coordinate Ca(2+). Positions 477, 479, and 483 each coordinate (1,3-beta-D-glucosyl)n. Catalysis depends on residues Glu-479 and Glu-483. Residues Lys-527, Lys-618, Asn-619, and Trp-621 each contribute to the Mg(2+) site. Positions 712, 714, 716, 717, 718, 723, 748, 749, 750, 752, 754, and 759 each coordinate Ca(2+).

Belongs to the glycosyl hydrolase 81 family. Requires Ca(2+) as cofactor. Mg(2+) is required as a cofactor.

It localises to the secreted. The enzyme catalyses Hydrolysis of (1-&gt;3)-beta-D-glucosidic linkages in (1-&gt;3)-beta-D-glucans.. With respect to regulation, inhibited by manganese, zinc, and copper ions. Cleaves internal linkages in 1,3-beta-glucan. May contribute to plant biomass degradation. This Acetivibrio thermocellus (strain ATCC 27405 / DSM 1237 / JCM 9322 / NBRC 103400 / NCIMB 10682 / NRRL B-4536 / VPI 7372) (Clostridium thermocellum) protein is Glucan endo-1,3-beta-D-glucosidase.